A 319-amino-acid chain; its full sequence is 12-(S)-hydroxy-5,8,10,14-eicosatetraenoic acid receptor (319 aa).

Residues 1–16 (MERTNCSAASTVVETA) are Extracellular-facing. N-linked (GlcNAc...) asparagine glycosylation is present at asparagine 5. Residues 17 to 37 (VGTMLTLECVLGLMGNAVALW) traverse the membrane as a helical segment. Topologically, residues 38-52 (TFFYRLKVWKPYAVY) are cytoplasmic. A helical transmembrane segment spans residues 53–73 (LFNLVVADLLLATSLPFFAAF). Topologically, residues 74–91 (YLKGKTWKLGHMPCQVLL) are extracellular. The helical transmembrane segment at 92 to 110 (FLLAFSRGVGVAFLTTVAL) threads the bilayer. The Cytoplasmic segment spans residues 111–131 (DRYLRVVHPRLRVNLLSLRAA). Residues 132-152 (WGISSLIWLLMVVLTPQNLLT) traverse the membrane as a helical segment. At 153–180 (CRTTQNSTECPSFYPTGGAKAIATCQEV) the chain is on the extracellular side. A helical membrane pass occupies residues 181 to 201 (LFFLQVLLPFGLISFCNSGLI). Residues 202 to 219 (RTLQKRLRESDKQPRIRR) are Cytoplasmic-facing. A helical membrane pass occupies residues 220 to 240 (ARVLVAIVLLLFGLCFLPSVL). Topologically, residues 241–265 (TRVLVHIFQEFKSCSVQQAIVRASD) are extracellular. The chain crosses the membrane as a helical span at residues 266 to 284 (IAGSLTCLHSTLSPAIYCF). Residues 285–319 (SNPAFTHSYRKVLKSLRGRRKAAESPSDNLRDSYS) lie on the Cytoplasmic side of the membrane.

The protein belongs to the G-protein coupled receptor 1 family. As to quaternary structure, interacts with KRAS; in a farnesylation-dependent manner.

Its subcellular location is the cell membrane. In terms of biological role, high-affinity receptor for 12-(S)-hydroxy-5,8,10,14-eicosatetraenoic acid (12-S-HETE), with much lower affinities for other HETE isomers. 12-S-HETE is a eicosanoid, a 12-lipoxygenase (ALOX12) metabolite of arachidonic acid, involved in many physiologic and pathologic processes, such as cell growth, adhesion, inflammation and cancer promotion. 12-S-HETE-binding leads to activation of ERK1/2 (MAPK3/MAPK1), MEK, and NF-kappa-B pathways and leads to cell growth. Plays a crucial role for proliferation, survival and macropinocytosis of KRAS-dependent cancer cells by mediating the translocation of KRAS from the endoplasmic reticulum to the plasma membrane (PM) and its association with the PM. Contributes to enhanced immune responses by inducing dendrite protrusion of small intestinal CX3CR1(+) phagocytes for the uptake of luminal antigens. Also acts as a key receptor for 12-(S)-HETE-mediated liver ischemia reperfusion injury. Its function is as follows. Proton-sensing G protein-coupled receptor. The polypeptide is 12-(S)-hydroxy-5,8,10,14-eicosatetraenoic acid receptor (Gpr31) (Mus musculus (Mouse)).